Consider the following 544-residue polypeptide: Sphingosine-1-phosphate lyase (544 aa).

The Lumenal portion of the chain corresponds to 1–29; sequence MDSFSYSSMKSMLIQARGSLNSRLSEFEP. A helical; Signal-anchor for type III membrane protein membrane pass occupies residues 30 to 50; that stretch reads LVLLLVPLVSLFLAQIIGSVF. Topologically, residues 51–544 are cytoplasmic; it reads GVVHEKGLKA…LLVSFMDSQY (494 aa). N6-(pyridoxal phosphate)lysine is present on K349.

This sequence belongs to the group II decarboxylase family. Sphingosine-1-phosphate lyase subfamily. Pyridoxal 5'-phosphate serves as cofactor. Expressed in the peripheral parts of leaves and the bases of trichomes.

It is found in the endoplasmic reticulum membrane. The enzyme catalyses sphinganine 1-phosphate = hexadecanal + phosphoethanolamine. The protein operates within lipid metabolism; sphingolipid metabolism. Functionally, cleaves phosphorylated sphingoid bases (PSBs), such as sphingosine-1-phosphate, into fatty aldehydes and phosphoethanolamine. May play a minor role in maintenance of sphingolipid metabolism during normal plant development and growth, but be required for maintaining sphingoid long chain bases (LCB) and their phosphorylated derivatives (LCB-P) levels when sphingolipid metabolism is perturbed. May play a role in dehydration stress. This is Sphingosine-1-phosphate lyase (DPL1) from Arabidopsis thaliana (Mouse-ear cress).